A 362-amino-acid chain; its full sequence is Atypical chemokine receptor 3 (362 aa).

The Extracellular portion of the chain corresponds to 1–40; that stretch reads MDLHLFDYSEPGNFSDISWPCNSSDCIVVDTVMCPNMPNK. Asn13, Asn22, and Asn39 each carry an N-linked (GlcNAc...) asparagine glycan. The helical transmembrane segment at 41–61 threads the bilayer; it reads SVLLYTLSFIYIFIFVIGMIA. At 62 to 81 the chain is on the cytoplasmic side; it reads NSVVVWVNIQAKTTGYDTHC. The helical transmembrane segment at 82–102 threads the bilayer; it reads YILNLAIADLWVVLTIPVWVV. The Extracellular portion of the chain corresponds to 103-118; sequence SLVQHNQWPMGELTCK. Cys117 and Cys196 form a disulfide bridge. A helical membrane pass occupies residues 119–139; it reads VTHLIFSINLFGSIFFLTCMS. At 140-162 the chain is on the cytoplasmic side; sequence VDRYLSITYFTNTPSSRKKMVRR. The helical transmembrane segment at 163 to 183 threads the bilayer; the sequence is VVCILVWLLAFCVSLPDTYYL. The Extracellular portion of the chain corresponds to 184–213; the sequence is KTVTSASNNETYCRSFYPEHSIKEWLIGME. A helical membrane pass occupies residues 214 to 234; sequence LVSVVLGFAVPFSIIAVFYFL. At 235–252 the chain is on the cytoplasmic side; the sequence is LARAISASSDQEKHSSRK. A helical membrane pass occupies residues 253–273; that stretch reads IIFSYVVVFLVCWLPYHVAVL. Residues 274-296 are Extracellular-facing; it reads LDIFSILHYIPFTCRLEHALFTA. Residues 297 to 319 traverse the membrane as a helical segment; that stretch reads LHVTQCLSLVHCCVNPVLYSFIN. Residues 320 to 362 are Cytoplasmic-facing; that stretch reads RNYRYELMKAFIFKYSAKTGLTKLIDASRVSETEYSALEQSTK. The tract at residues 324–362 is C-terminal cytoplasmic tail; it reads YELMKAFIFKYSAKTGLTKLIDASRVSETEYSALEQSTK. Residues Ser347, Ser350, and Ser355 each carry the phosphoserine modification.

The protein belongs to the G-protein coupled receptor 1 family. Atypical chemokine receptor subfamily. In terms of assembly, homodimer. Can form heterodimers with CXCR4; heterodimerization may regulate CXCR4 signaling activity. Interacts with ARRB1 and ARRB2. In terms of processing, the Ser/Thr residues in the C-terminal cytoplasmic tail may be phosphorylated. Post-translationally, ubiquitinated at the Lys residues in its C-terminal cytoplasmic tail and is essential for correct trafficking from and to the cell membrane. Deubiquitinated by CXCL12-stimulation in a reversible manner. In terms of tissue distribution, expressed in monocytes, basophils, B-cells, umbilical vein endothelial cells (HUVEC) and B-lymphoblastoid cells. Lower expression detected in CD4+ T-lymphocytes and natural killer cells. In the brain, detected in endothelial cells and capillaries, and in mature neurons of the frontal cortex and hippocampus. Expressed in tubular formation in the kidney. Highly expressed in astroglial tumor endothelial, microglial and glioma cells. Expressed at low levels in normal CD34+ progenitor cells, but at very high levels in several myeloid malignant cell lines. Expressed in breast carcinomas but not in normal breast tissue (at protein level).

The protein resides in the cell membrane. It localises to the early endosome. Its subcellular location is the recycling endosome. Atypical chemokine receptor that controls chemokine levels and localization via high-affinity chemokine binding that is uncoupled from classic ligand-driven signal transduction cascades, resulting instead in chemokine sequestration, degradation, or transcytosis. Also known as interceptor (internalizing receptor) or chemokine-scavenging receptor or chemokine decoy receptor. Acts as a receptor for chemokines CXCL11 and CXCL12/SDF1. Chemokine binding does not activate G-protein-mediated signal transduction but instead induces beta-arrestin recruitment, leading to ligand internalization and activation of MAPK signaling pathway. Required for regulation of CXCR4 protein levels in migrating interneurons, thereby adapting their chemokine responsiveness. In glioma cells, transduces signals via MEK/ERK pathway, mediating resistance to apoptosis. Promotes cell growth and survival. Not involved in cell migration, adhesion or proliferation of normal hematopoietic progenitors but activated by CXCL11 in malignant hemapoietic cells, leading to phosphorylation of ERK1/2 (MAPK3/MAPK1) and enhanced cell adhesion and migration. Plays a regulatory role in CXCR4-mediated activation of cell surface integrins by CXCL12. Required for heart valve development. Regulates axon guidance in the oculomotor system through the regulation of CXCL12 levels. In terms of biological role, (Microbial infection) Acts as a coreceptor with CXCR4 for a restricted number of HIV isolates. The polypeptide is Atypical chemokine receptor 3 (Homo sapiens (Human)).